Reading from the N-terminus, the 97-residue chain is Large ribosomal subunit protein eL21 (97 aa).

A compositionally biased stretch (basic residues) spans Met-1–Gly-24. Residues Met-1–Leu-25 are disordered.

The protein belongs to the eukaryotic ribosomal protein eL21 family.

The polypeptide is Large ribosomal subunit protein eL21 (rpl21e) (Pyrococcus abyssi (strain GE5 / Orsay)).